The sequence spans 107 residues: Flagellar hook-basal body complex protein FliE (107 aa).

This sequence belongs to the FliE family.

The protein resides in the bacterial flagellum basal body. This chain is Flagellar hook-basal body complex protein FliE, found in Mesorhizobium japonicum (strain LMG 29417 / CECT 9101 / MAFF 303099) (Mesorhizobium loti (strain MAFF 303099)).